A 338-amino-acid chain; its full sequence is Glycerol-3-phosphate dehydrogenase [NAD(P)+] (338 aa).

NADPH-binding residues include Ser-13, Trp-14, and Lys-108. Positions 108, 139, and 141 each coordinate sn-glycerol 3-phosphate. Residue Ala-143 participates in NADPH binding. 5 residues coordinate sn-glycerol 3-phosphate: Lys-194, Asp-247, Ser-257, Arg-258, and Asn-259. Lys-194 acts as the Proton acceptor in catalysis. Residue Arg-258 coordinates NADPH. Val-282 and Glu-284 together coordinate NADPH.

The protein belongs to the NAD-dependent glycerol-3-phosphate dehydrogenase family.

The protein localises to the cytoplasm. It catalyses the reaction sn-glycerol 3-phosphate + NAD(+) = dihydroxyacetone phosphate + NADH + H(+). The catalysed reaction is sn-glycerol 3-phosphate + NADP(+) = dihydroxyacetone phosphate + NADPH + H(+). It functions in the pathway membrane lipid metabolism; glycerophospholipid metabolism. Catalyzes the reduction of the glycolytic intermediate dihydroxyacetone phosphate (DHAP) to sn-glycerol 3-phosphate (G3P), the key precursor for phospholipid synthesis. This chain is Glycerol-3-phosphate dehydrogenase [NAD(P)+], found in Streptococcus agalactiae serotype V (strain ATCC BAA-611 / 2603 V/R).